The following is a 285-amino-acid chain: N-alpha-acetyltransferase 40 (285 aa).

Residues 88 to 274 form the N-acetyltransferase domain; it reads INYKLHKSRG…GGGRVVVPCD (187 aa). Substrate-binding positions include Y116, 163 to 165, and Y185; that span reads TEE. Residues 187–189 and 195–200 contribute to the acetyl-CoA site; these read VHV and GHGIGR. T228 is a binding site for substrate. Position 233 (N233) interacts with acetyl-CoA.

Belongs to the acetyltransferase family. NAA40 subfamily.

The protein resides in the nucleus. Its subcellular location is the cytoplasm. The enzyme catalyses N-terminal L-seryl-[histone H4] + acetyl-CoA = N-terminal N(alpha)-acetyl-L-seryl-[histone H4] + CoA + H(+). It carries out the reaction N-terminal L-seryl-[histone H2A] + acetyl-CoA = N-terminal N(alpha)-acetyl-L-seryl-[histone H2A] + CoA + H(+). In terms of biological role, N-alpha-acetyltransferase that specifically mediates the acetylation of the N-terminal residues of histones H4 and H2A. In Saccharomyces cerevisiae (strain ATCC 204508 / S288c) (Baker's yeast), this protein is N-alpha-acetyltransferase 40.